We begin with the raw amino-acid sequence, 242 residues long: Pyridoxine 5'-phosphate synthase (242 aa).

Asn-7 is a 3-amino-2-oxopropyl phosphate binding site. A 1-deoxy-D-xylulose 5-phosphate-binding site is contributed by Asp-9–His-10. 3-amino-2-oxopropyl phosphate is bound at residue Arg-18. The Proton acceptor role is filled by His-43. Arg-45 and His-50 together coordinate 1-deoxy-D-xylulose 5-phosphate. The active-site Proton acceptor is the Glu-70. Thr-100 contacts 1-deoxy-D-xylulose 5-phosphate. The active-site Proton donor is His-191. Residues Gly-192 and Gly-213–His-214 each bind 3-amino-2-oxopropyl phosphate.

Belongs to the PNP synthase family. Homooctamer; tetramer of dimers.

The protein localises to the cytoplasm. It carries out the reaction 3-amino-2-oxopropyl phosphate + 1-deoxy-D-xylulose 5-phosphate = pyridoxine 5'-phosphate + phosphate + 2 H2O + H(+). Its pathway is cofactor biosynthesis; pyridoxine 5'-phosphate biosynthesis; pyridoxine 5'-phosphate from D-erythrose 4-phosphate: step 5/5. Catalyzes the complicated ring closure reaction between the two acyclic compounds 1-deoxy-D-xylulose-5-phosphate (DXP) and 3-amino-2-oxopropyl phosphate (1-amino-acetone-3-phosphate or AAP) to form pyridoxine 5'-phosphate (PNP) and inorganic phosphate. The protein is Pyridoxine 5'-phosphate synthase of Chromobacterium violaceum (strain ATCC 12472 / DSM 30191 / JCM 1249 / CCUG 213 / NBRC 12614 / NCIMB 9131 / NCTC 9757 / MK).